Consider the following 297-residue polypeptide: NAD kinase (297 aa).

The active-site Proton acceptor is the Asp-74. NAD(+)-binding positions include 74–75, Arg-79, 148–149, Arg-176, Asp-178, 189–194, and Gln-248; these read DG, NE, and TAYALS.

It belongs to the NAD kinase family. A divalent metal cation is required as a cofactor.

It is found in the cytoplasm. The enzyme catalyses NAD(+) + ATP = ADP + NADP(+) + H(+). In terms of biological role, involved in the regulation of the intracellular balance of NAD and NADP, and is a key enzyme in the biosynthesis of NADP. Catalyzes specifically the phosphorylation on 2'-hydroxyl of the adenosine moiety of NAD to yield NADP. In Blochmanniella pennsylvanica (strain BPEN), this protein is NAD kinase.